The primary structure comprises 257 residues: tRNA pseudouridine synthase A (257 aa).

The active-site Nucleophile is Asp52. Tyr111 is a substrate binding site.

It belongs to the tRNA pseudouridine synthase TruA family. As to quaternary structure, homodimer.

It catalyses the reaction uridine(38/39/40) in tRNA = pseudouridine(38/39/40) in tRNA. In terms of biological role, formation of pseudouridine at positions 38, 39 and 40 in the anticodon stem and loop of transfer RNAs. The protein is tRNA pseudouridine synthase A of Cereibacter sphaeroides (strain ATCC 17025 / ATH 2.4.3) (Rhodobacter sphaeroides).